The primary structure comprises 459 residues: ATP-dependent protease ATPase subunit HslU (459 aa).

ATP-binding positions include Val18, 60–65 (GVGKTE), Asp269, Glu337, and Arg409.

Belongs to the ClpX chaperone family. HslU subfamily. As to quaternary structure, a double ring-shaped homohexamer of HslV is capped on each side by a ring-shaped HslU homohexamer. The assembly of the HslU/HslV complex is dependent on binding of ATP.

It is found in the cytoplasm. ATPase subunit of a proteasome-like degradation complex; this subunit has chaperone activity. The binding of ATP and its subsequent hydrolysis by HslU are essential for unfolding of protein substrates subsequently hydrolyzed by HslV. HslU recognizes the N-terminal part of its protein substrates and unfolds these before they are guided to HslV for hydrolysis. This is ATP-dependent protease ATPase subunit HslU from Myxococcus xanthus (strain DK1622).